A 309-amino-acid polypeptide reads, in one-letter code: Acetylglutamate kinase (309 aa).

Substrate-binding positions include 69-70 (GG), R91, and N194.

It belongs to the acetylglutamate kinase family. ArgB subfamily.

The protein resides in the cytoplasm. It catalyses the reaction N-acetyl-L-glutamate + ATP = N-acetyl-L-glutamyl 5-phosphate + ADP. Its pathway is amino-acid biosynthesis; L-arginine biosynthesis; N(2)-acetyl-L-ornithine from L-glutamate: step 2/4. In terms of biological role, catalyzes the ATP-dependent phosphorylation of N-acetyl-L-glutamate. The polypeptide is Acetylglutamate kinase (Vesicomyosocius okutanii subsp. Calyptogena okutanii (strain HA)).